Here is a 423-residue protein sequence, read N- to C-terminus: Deferrochelatase (423 aa).

The tat-type signal signal peptide spans 1-35 (MQYEDENGVNEPSRRRLLKGIGALALAGSCPVAHA). Heme b is bound by residues 236–238 (GTA), histidine 329, 334–336 (NPR), and arginine 347.

The protein belongs to the DyP-type peroxidase family. EfeB subfamily. In terms of assembly, homodimer. Part of a ferrous iron transporter composed of EfeU, EfeO and EfeB. It depends on heme b as a cofactor. Post-translationally, predicted to be exported by the Tat system. The position of the signal peptide cleavage has not been experimentally proven.

The protein localises to the periplasm. It catalyses the reaction heme b + 2 H(+) = protoporphyrin IX + Fe(2+). Its function is as follows. Involved in the recovery of exogenous heme iron. Extracts iron from heme while preserving the protoporphyrin ring intact. The sequence is that of Deferrochelatase (efeB) from Escherichia coli O6:H1 (strain CFT073 / ATCC 700928 / UPEC).